The chain runs to 214 residues: Pyrrolidone-carboxylate peptidase (214 aa).

Residues Glu-78, Cys-141, and His-165 contribute to the active site.

Belongs to the peptidase C15 family. In terms of assembly, homotetramer.

It is found in the cytoplasm. It carries out the reaction Release of an N-terminal pyroglutamyl group from a polypeptide, the second amino acid generally not being Pro.. Functionally, removes 5-oxoproline from various penultimate amino acid residues except L-proline. In Streptococcus pneumoniae serotype 2 (strain D39 / NCTC 7466), this protein is Pyrrolidone-carboxylate peptidase.